A 551-amino-acid chain; its full sequence is Nucleobase-ascorbate transporter 3 (551 aa).

A disordered region spans residues 1–30 (MVETGHHHQHPPAPAAAGHPPVPSMAMARN). 12 helical membrane-spanning segments follow: residues 56–76 (ETVV…VLIA), 92–111 (RVIQ…QTLI), 117–136 (TVMG…IRDY), 158–178 (SLII…WGNL), 179–199 (IRIF…LGLF), 202–222 (GFPL…LLII), 242–262 (ALLV…VSGA), 306–326 (VFGM…VFFA), 390–410 (FFMI…SIPL), 412–432 (IFAG…ISFI), 442–462 (NMYV…YFLA), and 481–501 (DILN…ATIL).

This sequence belongs to the nucleobase:cation symporter-2 (NCS2) (TC 2.A.40) family. Expressed in the apical meristem 4 days after imbibition (DAI). Expressed in the major veins of rosette leaves and pedicels. Expressed in the root central cylinder, root meristems, root tips and lateral root primordia.

The protein localises to the membrane. The polypeptide is Nucleobase-ascorbate transporter 3 (NAT3) (Arabidopsis thaliana (Mouse-ear cress)).